A 424-amino-acid chain; its full sequence is Glutamate-1-semialdehyde 2,1-aminomutase (424 aa).

Lys265 is subject to N6-(pyridoxal phosphate)lysine.

It belongs to the class-III pyridoxal-phosphate-dependent aminotransferase family. HemL subfamily. Homodimer. Pyridoxal 5'-phosphate is required as a cofactor.

The protein localises to the cytoplasm. The enzyme catalyses (S)-4-amino-5-oxopentanoate = 5-aminolevulinate. The protein operates within porphyrin-containing compound metabolism; protoporphyrin-IX biosynthesis; 5-aminolevulinate from L-glutamyl-tRNA(Glu): step 2/2. The sequence is that of Glutamate-1-semialdehyde 2,1-aminomutase from Alkaliphilus oremlandii (strain OhILAs) (Clostridium oremlandii (strain OhILAs)).